The primary structure comprises 514 residues: Cytochrome P450 monooxygenase aneD (514 aa).

A helical transmembrane segment spans residues 6–26 (ICTLLAVIATTSLGLLFLSII). 3 N-linked (GlcNAc...) asparagine glycosylation sites follow: N113, N261, and N347. C424 contacts heme.

The protein belongs to the cytochrome P450 family. Heme is required as a cofactor.

Its subcellular location is the membrane. The catalysed reaction is asperaculane D + reduced [NADPH--hemoprotein reductase] + O2 = asperaculane E + oxidized [NADPH--hemoprotein reductase] + H2O + H(+). Its pathway is secondary metabolite biosynthesis. Its function is as follows. Cytochrome P450 monooxygenase; part of the gene cluster that mediates the biosynthesis of aculenes, a unique type of norsesquiterpenes that contain a nordaucane skeleton linked to an L-proline moiety and are of mixed biosynthetic origin. The pathway begins with the synthesis of dauca-4,7-diene by the terpene cyclase aneC using farnesyl pyrophosphate (FPP) as substrate. The cytochrome P450 monooxygenase aneF then performs the initial oxidation at C-12 of dauca-4,7-diene to yield asperaculane D. Asperaculane D is substrate of the cytochrome P450 monooxygenase aneD for C-10 hydroxylation to yield asperaculane E. The cytochrome P450 monooxygenase aneG then converts asperaculane E into aculene D via C-2 oxidation. The monomodular nonribosomal peptide synthtase aneB adenylates L-proline and the thiohydrolase aneE transfers this activated L-proline derivative to aculenes D and C to produce respectively aculenes B and A. The dioxygenase aneA converts aculene D into aculene C, and aculene B into aculene A by introducing the 5,6-alkene moiety. Asperculanes A, B, C and F, as well as 14-prolyl asperculane C, might be shunt products of the pathway. In Aspergillus aculeatus (strain ATCC 16872 / CBS 172.66 / WB 5094), this protein is Cytochrome P450 monooxygenase aneD.